A 223-amino-acid chain; its full sequence is Deoxyribose-phosphate aldolase (223 aa).

D91 serves as the catalytic Proton donor/acceptor. The active-site Schiff-base intermediate with acetaldehyde is K153. K182 functions as the Proton donor/acceptor in the catalytic mechanism.

Belongs to the DeoC/FbaB aldolase family. DeoC type 1 subfamily.

The protein resides in the cytoplasm. It carries out the reaction 2-deoxy-D-ribose 5-phosphate = D-glyceraldehyde 3-phosphate + acetaldehyde. It functions in the pathway carbohydrate degradation; 2-deoxy-D-ribose 1-phosphate degradation; D-glyceraldehyde 3-phosphate and acetaldehyde from 2-deoxy-alpha-D-ribose 1-phosphate: step 2/2. Catalyzes a reversible aldol reaction between acetaldehyde and D-glyceraldehyde 3-phosphate to generate 2-deoxy-D-ribose 5-phosphate. In Streptococcus agalactiae serotype V (strain ATCC BAA-611 / 2603 V/R), this protein is Deoxyribose-phosphate aldolase.